The sequence spans 351 residues: Phosphoribosylformylglycinamidine cyclo-ligase (351 aa).

It belongs to the AIR synthase family.

Its subcellular location is the cytoplasm. The enzyme catalyses 2-formamido-N(1)-(5-O-phospho-beta-D-ribosyl)acetamidine + ATP = 5-amino-1-(5-phospho-beta-D-ribosyl)imidazole + ADP + phosphate + H(+). It participates in purine metabolism; IMP biosynthesis via de novo pathway; 5-amino-1-(5-phospho-D-ribosyl)imidazole from N(2)-formyl-N(1)-(5-phospho-D-ribosyl)glycinamide: step 2/2. This chain is Phosphoribosylformylglycinamidine cyclo-ligase, found in Azotobacter vinelandii (strain DJ / ATCC BAA-1303).